Reading from the N-terminus, the 1401-residue chain is DNA-directed RNA polymerase subunit beta' (1401 aa).

Residues Cys-70, Cys-72, Cys-85, and Cys-88 each coordinate Zn(2+). Residues Asp-460, Asp-462, and Asp-464 each contribute to the Mg(2+) site. Zn(2+) is bound by residues Cys-808, Cys-882, Cys-889, and Cys-892.

The protein belongs to the RNA polymerase beta' chain family. In terms of assembly, the RNAP catalytic core consists of 2 alpha, 1 beta, 1 beta' and 1 omega subunit. When a sigma factor is associated with the core the holoenzyme is formed, which can initiate transcription. Mg(2+) serves as cofactor. The cofactor is Zn(2+).

The enzyme catalyses RNA(n) + a ribonucleoside 5'-triphosphate = RNA(n+1) + diphosphate. Its function is as follows. DNA-dependent RNA polymerase catalyzes the transcription of DNA into RNA using the four ribonucleoside triphosphates as substrates. This Legionella pneumophila (strain Corby) protein is DNA-directed RNA polymerase subunit beta'.